The following is a 262-amino-acid chain: Phosphatidylserine decarboxylase proenzyme (262 aa).

Catalysis depends on charge relay system; for autoendoproteolytic cleavage activity residues aspartate 86, histidine 142, and serine 226. Serine 226 functions as the Schiff-base intermediate with substrate; via pyruvic acid; for decarboxylase activity in the catalytic mechanism. At serine 226 the chain carries Pyruvic acid (Ser); by autocatalysis.

It belongs to the phosphatidylserine decarboxylase family. PSD-B subfamily. Prokaryotic type I sub-subfamily. As to quaternary structure, heterodimer of a large membrane-associated beta subunit and a small pyruvoyl-containing alpha subunit. Pyruvate is required as a cofactor. Post-translationally, is synthesized initially as an inactive proenzyme. Formation of the active enzyme involves a self-maturation process in which the active site pyruvoyl group is generated from an internal serine residue via an autocatalytic post-translational modification. Two non-identical subunits are generated from the proenzyme in this reaction, and the pyruvate is formed at the N-terminus of the alpha chain, which is derived from the carboxyl end of the proenzyme. The autoendoproteolytic cleavage occurs by a canonical serine protease mechanism, in which the side chain hydroxyl group of the serine supplies its oxygen atom to form the C-terminus of the beta chain, while the remainder of the serine residue undergoes an oxidative deamination to produce ammonia and the pyruvoyl prosthetic group on the alpha chain. During this reaction, the Ser that is part of the protease active site of the proenzyme becomes the pyruvoyl prosthetic group, which constitutes an essential element of the active site of the mature decarboxylase.

It localises to the cell membrane. It carries out the reaction a 1,2-diacyl-sn-glycero-3-phospho-L-serine + H(+) = a 1,2-diacyl-sn-glycero-3-phosphoethanolamine + CO2. It functions in the pathway phospholipid metabolism; phosphatidylethanolamine biosynthesis; phosphatidylethanolamine from CDP-diacylglycerol: step 2/2. Catalyzes the formation of phosphatidylethanolamine (PtdEtn) from phosphatidylserine (PtdSer). This is Phosphatidylserine decarboxylase proenzyme from Bacillus thuringiensis (strain Al Hakam).